The following is a 469-amino-acid chain: Glutamate--tRNA ligase (469 aa).

Positions 10–20 (PSPTGYLHVGG) match the 'HIGH' region motif. Residues C99, C101, C126, and D128 each coordinate Zn(2+). A 'KMSKS' region motif is present at residues 238 to 242 (RLSKR). K241 contacts ATP.

This sequence belongs to the class-I aminoacyl-tRNA synthetase family. Glutamate--tRNA ligase type 1 subfamily. As to quaternary structure, monomer. The cofactor is Zn(2+).

It is found in the cytoplasm. The catalysed reaction is tRNA(Glu) + L-glutamate + ATP = L-glutamyl-tRNA(Glu) + AMP + diphosphate. Catalyzes the attachment of glutamate to tRNA(Glu) in a two-step reaction: glutamate is first activated by ATP to form Glu-AMP and then transferred to the acceptor end of tRNA(Glu). This Pelobacter propionicus (strain DSM 2379 / NBRC 103807 / OttBd1) protein is Glutamate--tRNA ligase.